Here is a 202-residue protein sequence, read N- to C-terminus: Shikimate kinase (202 aa).

ATP is bound at residue 20–25; the sequence is GSGKST. Ser24 contributes to the Mg(2+) binding site. Substrate is bound by residues Asp42, Arg66, and Gly88. Position 126 (Arg126) interacts with ATP. Arg153 serves as a coordination point for substrate.

The protein belongs to the shikimate kinase family. Monomer. Requires Mg(2+) as cofactor.

Its subcellular location is the cytoplasm. The enzyme catalyses shikimate + ATP = 3-phosphoshikimate + ADP + H(+). It functions in the pathway metabolic intermediate biosynthesis; chorismate biosynthesis; chorismate from D-erythrose 4-phosphate and phosphoenolpyruvate: step 5/7. Its function is as follows. Catalyzes the specific phosphorylation of the 3-hydroxyl group of shikimic acid using ATP as a cosubstrate. This is Shikimate kinase from Chlorobium luteolum (strain DSM 273 / BCRC 81028 / 2530) (Pelodictyon luteolum).